We begin with the raw amino-acid sequence, 301 residues long: Probable alpha-L-glutamate ligase (301 aa).

Residues 104–287 enclose the ATP-grasp domain; sequence LQLLSRRGIG…VAGIIIEHLE (184 aa). ATP is bound by residues Lys-141, 178–179, Asp-187, and 211–213; these read EY and RSN. Residues Asp-248, Glu-260, and Asn-262 each coordinate Mg(2+). Mn(2+) is bound by residues Asp-248, Glu-260, and Asn-262.

It belongs to the RimK family. Mg(2+) serves as cofactor. Mn(2+) is required as a cofactor.

The polypeptide is Probable alpha-L-glutamate ligase (Pseudomonas fluorescens (strain Pf0-1)).